The sequence spans 64 residues: RICLNQQQSTPEDQPTNGQCYIKTDCQNKTWNTHRGSRTDRGCGCPKVKPGINLRCCKTDKCNE.

4 disulfide bridges follow: Cys3-Cys26, Cys20-Cys43, Cys45-Cys56, and Cys57-Cys62.

The protein belongs to the three-finger toxin family. Short-chain subfamily. Type I alpha-neurotoxin sub-subfamily. Expressed by the venom gland.

The protein localises to the secreted. Functionally, binds to muscle nicotinic acetylcholine receptor (nAChR) and inhibit acetylcholine from binding to the receptor, thereby impairing neuromuscular transmission. This is Short neurotoxin 1 from Bungarus fasciatus (Banded krait).